We begin with the raw amino-acid sequence, 78 residues long: Acyl carrier protein (78 aa).

Residues 2–77 (STIEERVKKI…AAIDYVNSHQ (76 aa)) form the Carrier domain. Position 37 is an O-(pantetheine 4'-phosphoryl)serine (serine 37).

This sequence belongs to the acyl carrier protein (ACP) family. 4'-phosphopantetheine is transferred from CoA to a specific serine of apo-ACP by AcpS. This modification is essential for activity because fatty acids are bound in thioester linkage to the sulfhydryl of the prosthetic group.

Its subcellular location is the cytoplasm. It functions in the pathway lipid metabolism; fatty acid biosynthesis. Carrier of the growing fatty acid chain in fatty acid biosynthesis. The polypeptide is Acyl carrier protein (Pseudomonas putida (strain W619)).